We begin with the raw amino-acid sequence, 174 residues long: MDITIHNPLIRRPLFSWLTPSRIFDQIFGEHLQESELLPTSPSLSPFLMRSPFFRMPSWLETGLSEMRLEKDKFSVNLDVKHFSPEELKVKVLGDMIEIHGKHEERQDEHGFIAREFSRKYRIPADVDPLTITSSLSLDGVLTVSAPRKQSDVPERSIPITREEKPAIAGSQRK.

Met1 is subject to N-acetylmethionine. Residues 55 to 163 form the sHSP domain; the sequence is RMPSWLETGL…PERSIPITRE (109 aa). Zn(2+) is bound by residues His82, His103, Glu105, and His110. A disordered region spans residues 148–174; the sequence is RKQSDVPERSIPITREEKPAIAGSQRK. A compositionally biased stretch (basic and acidic residues) spans 149-166; sequence KQSDVPERSIPITREEKP.

The protein belongs to the small heat shock protein (HSP20) family. As to quaternary structure, heteromer composed of three CRYAA and one CRYAB subunits. Aggregates with homologous proteins, including the small heat shock protein HSPB1, to form large heteromeric complexes. Inter-subunit bridging via zinc ions enhances stability, which is crucial as there is no protein turn over in the lens. In terms of tissue distribution, lens as well as other tissues.

May contribute to the transparency and refractive index of the lens. This is Alpha-crystallin B chain (CRYAB) from Gallus gallus (Chicken).